The primary structure comprises 308 residues: MGLLESVKSINWEHESSPVYQDFRVLPLFAVFFPSIRFLLDRFVFEKLAKYLIYGKHRQDMGDDTTERKKKIRKFKESAWKCVYYLSAEILALSVTYNEPWFMNTKYFWVGPGDQTWPDQQTKLKLKLLYMFVAGFYTYSIFALVFWETRRSDFGVSMGHHIATLILIVLSYVCSFSRVGSVVLALHDASDVFLEVGKMSKYSGAERIASFSFILFVLSWIILRLIYYPFWILWSTSYEVVLELDKDKHPIEGPIYYYMFNTLLYCLLVLHIYWWVLMYRMLVKQIQDRGKLSEDVRSDSEGEDEHED.

Helical transmembrane passes span 25 to 45 (VLPL…RFVF), 82 to 102 (CVYY…EPWF), 128 to 148 (LLYM…VFWE), 154 to 174 (FGVS…SYVC), 213 to 233 (FILF…FWIL), and 258 to 278 (YMFN…WVLM). The region spanning 73-287 (RKFKESAWKC…MYRMLVKQIQ (215 aa)) is the TLC domain. 2 positions are modified to phosphoserine: Ser298 and Ser300.

In terms of tissue distribution, expressed ubiquitously at low levels. Not observed in pollen.

The protein localises to the endoplasmic reticulum membrane. It catalyses the reaction (4R)-hydroxysphinganine + a fatty acyl-CoA = an N-acyl-(4R)-4-hydroxysphinganine + CoA + H(+). It carries out the reaction a sphingoid base + tetracosanoyl-CoA = an N-tetracosanoyl-sphingoid base + CoA + H(+). The catalysed reaction is (4R)-hydroxysphinganine + hexadecanoyl-CoA = N-hexadecanoyl-(4R)-hydroxysphinganine + CoA + H(+). The enzyme catalyses (4R)-hydroxysphinganine + octadecanoyl-CoA = N-octadecanoyl-(4R)-hydroxysphinganine + CoA + H(+). It catalyses the reaction (4R)-hydroxysphinganine + eicosanoyl-CoA = N-eicosanoyl-(4R)-hydroxysphinganine + CoA + H(+). It carries out the reaction docosanoyl-CoA + (4R)-hydroxysphinganine = N-docosanoyl-(4R)-hydroxysphinganine + CoA + H(+). The catalysed reaction is hexacosanoyl-CoA + (4R)-hydroxysphinganine = N-hexacosanoyl-(4R)-hydroxysphinganine + CoA + H(+). The enzyme catalyses tetracosanoyl-CoA + (4R)-hydroxysphinganine = N-tetracosanoyl-(4R)-hydroxysphinganine + CoA + H(+). It catalyses the reaction tetracosanoyl-CoA + sphing-4-enine = N-tetracosanoyl-sphing-4-enine + CoA + H(+). It carries out the reaction sphinga-(4E,8Z)-dienine + tetracosanoyl-CoA = N-tetracosanoylsphinga-(4E,8Z)-dienine + CoA + H(+). The catalysed reaction is sphinga-(4E,8E)-dienine + tetracosanoyl-CoA = N-tetracosanoylsphinga-(4E,8E)-dienine + CoA + H(+). The enzyme catalyses (4R)-hydroxysphing-(8Z)-enine + tetracosanoyl-CoA = N-tetracosanoyl-(4R)-hydroxysphing-(8Z)-enine + CoA + H(+). It catalyses the reaction (4R)-hydroxysphing-(8E)-enine + tetracosanoyl-CoA = N-tetracosanoyl-(4R)-hydroxysphing-(8E)-enine + CoA + H(+). It participates in sphingolipid metabolism. Inhibited by the mycotoxin fumonisin B(1), a sphingosine analog mycotoxins produced by pathogenic fungi. Repressed by divalent cation such as magnesium Mg(2+), copper Cu(2+), zinc Zn(2+), manganese Mn(2+), calcium Ca(2+) and cobalt Co(2+). Essential for plant growth, promotes cell division in root meristems. Catalyzes the biosynthesis of ceramide sphingolipids with C(16) to C(28) fatty acids, structural membrane lipids involved in membrane trafficking (e.g. early endosomes) and cell polarity (e.g. polar auxin transport related proteins); active on a broad substrate spectrum, both regarding chain lengths of fatty acids and the sphingoid base, such as long-chain base (LCB) phytosphingosine (t18:0). Mediates resistance to sphinganine-analog mycotoxins (SAMs, e.g. fumonisin B(1)) by restoring the sphingolipid biosynthesis. Could salvage the transport of GPI-anchored proteins from the endoplasmic reticulum to the Golgi apparatus in ceramides-depleted cells after SAM exposure. Contributes to hypoxic conditions tolerance (e.g. submergences), especially in the dark, by promoting the formation of very-long-chain (VLC) ceramide species (22:1, 24:1 and 26:1) and of VLC unsaturated ceramides, which are modulating CTR1-mediated ethylene signaling leading to endoplasmic reticulum (ER)-to-nucleus translocation of EIN2 and EIN3. The chain is Ceramide synthase 1 LOH3 from Arabidopsis thaliana (Mouse-ear cress).